The following is a 255-amino-acid chain: Zinc-finger homeodomain protein 6 (255 aa).

Residues 1-35 (MEFRGHDEPVDEMGVAYGRTPPSSSSSPAASASAG) form a disordered region. Positions 21-35 (PPSSSSSPAASASAG) are enriched in low complexity. The segment at 45 to 93 (YHECLRNHAAAMGGHVVDGCREFMPMPGDAADALKCAACGCHRSFHRKD) adopts a ZF-HD dimerization-type; degenerate zinc-finger fold. Positions 106–126 (PSPPTPRVPLLMPPPQPQPHP) are enriched in pro residues. Disordered regions lie at residues 106-181 (PSPP…KFTP) and 226-255 (NNKS…QQQQ). The span at 139–153 (YHHTPSGSGGTTTES) shows a compositional bias: low complexity. Residues 172–235 (RKRFRTKFTP…NNKSSIGSSS (64 aa)) constitute a DNA-binding region (homeobox). Positions 240-255 (RRQPQEQQSQQQQQQQ) are enriched in low complexity.

As to quaternary structure, homo- and heterodimer with other ZFHD proteins.

Its subcellular location is the nucleus. Its function is as follows. Putative transcription factor. This chain is Zinc-finger homeodomain protein 6 (ZHD6), found in Oryza sativa subsp. japonica (Rice).